Here is a 256-residue protein sequence, read N- to C-terminus: Thiazole synthase (256 aa).

Lys95 functions as the Schiff-base intermediate with DXP in the catalytic mechanism. 1-deoxy-D-xylulose 5-phosphate-binding positions include Gly156, 182 to 183, and 204 to 205; these read AG and NT.

Belongs to the ThiG family. In terms of assembly, homotetramer. Forms heterodimers with either ThiH or ThiS.

The protein localises to the cytoplasm. The enzyme catalyses [ThiS sulfur-carrier protein]-C-terminal-Gly-aminoethanethioate + 2-iminoacetate + 1-deoxy-D-xylulose 5-phosphate = [ThiS sulfur-carrier protein]-C-terminal Gly-Gly + 2-[(2R,5Z)-2-carboxy-4-methylthiazol-5(2H)-ylidene]ethyl phosphate + 2 H2O + H(+). The protein operates within cofactor biosynthesis; thiamine diphosphate biosynthesis. Functionally, catalyzes the rearrangement of 1-deoxy-D-xylulose 5-phosphate (DXP) to produce the thiazole phosphate moiety of thiamine. Sulfur is provided by the thiocarboxylate moiety of the carrier protein ThiS. In vitro, sulfur can be provided by H(2)S. This is Thiazole synthase from Salmonella paratyphi A (strain ATCC 9150 / SARB42).